Here is a 206-residue protein sequence, read N- to C-terminus: Methylthioribulose-1-phosphate dehydratase (206 aa).

Residues His96 and His98 each coordinate Zn(2+).

Belongs to the aldolase class II family. MtnB subfamily. The cofactor is Zn(2+).

The catalysed reaction is 5-(methylsulfanyl)-D-ribulose 1-phosphate = 5-methylsulfanyl-2,3-dioxopentyl phosphate + H2O. Its pathway is amino-acid biosynthesis; L-methionine biosynthesis via salvage pathway; L-methionine from S-methyl-5-thio-alpha-D-ribose 1-phosphate: step 2/6. Its function is as follows. Catalyzes the dehydration of methylthioribulose-1-phosphate (MTRu-1-P) into 2,3-diketo-5-methylthiopentyl-1-phosphate (DK-MTP-1-P). The protein is Methylthioribulose-1-phosphate dehydratase of Azotobacter vinelandii (strain DJ / ATCC BAA-1303).